The chain runs to 478 residues: Protein nucleotidyltransferase YdiU (478 aa).

8 residues coordinate ATP: glycine 84, glycine 86, arginine 87, lysine 107, aspartate 119, glycine 120, arginine 170, and arginine 177. The active-site Proton acceptor is aspartate 246. 2 residues coordinate Mg(2+): asparagine 247 and aspartate 256. Aspartate 256 serves as a coordination point for ATP.

It belongs to the SELO family. Mg(2+) is required as a cofactor. The cofactor is Mn(2+).

It catalyses the reaction L-seryl-[protein] + ATP = 3-O-(5'-adenylyl)-L-seryl-[protein] + diphosphate. It carries out the reaction L-threonyl-[protein] + ATP = 3-O-(5'-adenylyl)-L-threonyl-[protein] + diphosphate. The enzyme catalyses L-tyrosyl-[protein] + ATP = O-(5'-adenylyl)-L-tyrosyl-[protein] + diphosphate. The catalysed reaction is L-histidyl-[protein] + UTP = N(tele)-(5'-uridylyl)-L-histidyl-[protein] + diphosphate. It catalyses the reaction L-seryl-[protein] + UTP = O-(5'-uridylyl)-L-seryl-[protein] + diphosphate. It carries out the reaction L-tyrosyl-[protein] + UTP = O-(5'-uridylyl)-L-tyrosyl-[protein] + diphosphate. Functionally, nucleotidyltransferase involved in the post-translational modification of proteins. It can catalyze the addition of adenosine monophosphate (AMP) or uridine monophosphate (UMP) to a protein, resulting in modifications known as AMPylation and UMPylation. The polypeptide is Protein nucleotidyltransferase YdiU (Shigella boydii serotype 18 (strain CDC 3083-94 / BS512)).